The primary structure comprises 490 residues: Probable cytosol aminopeptidase (490 aa).

Mn(2+) contacts are provided by Lys260 and Asp265. Residue Lys272 is part of the active site. Positions 284, 343, and 345 each coordinate Mn(2+). Arg347 is a catalytic residue.

It belongs to the peptidase M17 family. Mn(2+) serves as cofactor.

It localises to the cytoplasm. It catalyses the reaction Release of an N-terminal amino acid, Xaa-|-Yaa-, in which Xaa is preferably Leu, but may be other amino acids including Pro although not Arg or Lys, and Yaa may be Pro. Amino acid amides and methyl esters are also readily hydrolyzed, but rates on arylamides are exceedingly low.. The enzyme catalyses Release of an N-terminal amino acid, preferentially leucine, but not glutamic or aspartic acids.. Its function is as follows. Presumably involved in the processing and regular turnover of intracellular proteins. Catalyzes the removal of unsubstituted N-terminal amino acids from various peptides. This chain is Probable cytosol aminopeptidase, found in Gloeothece citriformis (strain PCC 7424) (Cyanothece sp. (strain PCC 7424)).